Here is an 88-residue protein sequence, read N- to C-terminus: Small ribosomal subunit protein bS20 (88 aa).

The segment at 1–27 (MANSKSAKKRALQSEKRRQHNASRRSM) is disordered.

This sequence belongs to the bacterial ribosomal protein bS20 family.

Functionally, binds directly to 16S ribosomal RNA. In Shewanella baltica (strain OS223), this protein is Small ribosomal subunit protein bS20.